A 203-amino-acid polypeptide reads, in one-letter code: MADVLRLVVGLGNPGTKYEGTRHNIGFMALEQMASREGFSFRQQSKLHGLVAEHGIGESRLRLLMPQTYMNDSGRSIRAALDWFGFTPEQLLVLVDDMDIPLGRLRLRGQGSAGGHNGLRSTIQHLGTQAFPRLRIGIGAPADNPAERRARTVSHVLGSFSRAEQPEVDVVLDGVLEAIQRIQRQGLDRAGNWINGFCPASVE.

Tyrosine 18 serves as a coordination point for tRNA. The Proton acceptor role is filled by histidine 23. TRNA-binding residues include tyrosine 69, asparagine 71, and asparagine 117.

The protein belongs to the PTH family. In terms of assembly, monomer.

It localises to the cytoplasm. The enzyme catalyses an N-acyl-L-alpha-aminoacyl-tRNA + H2O = an N-acyl-L-amino acid + a tRNA + H(+). Its function is as follows. Hydrolyzes ribosome-free peptidyl-tRNAs (with 1 or more amino acids incorporated), which drop off the ribosome during protein synthesis, or as a result of ribosome stalling. Catalyzes the release of premature peptidyl moieties from peptidyl-tRNA molecules trapped in stalled 50S ribosomal subunits, and thus maintains levels of free tRNAs and 50S ribosomes. The polypeptide is Peptidyl-tRNA hydrolase (Parasynechococcus marenigrum (strain WH8102)).